We begin with the raw amino-acid sequence, 322 residues long: DNA repair and recombination protein RadA (322 aa).

105 to 112 (GMYGSGKT) is an ATP binding site.

The protein belongs to the eukaryotic RecA-like protein family.

Involved in DNA repair and in homologous recombination. Binds and assemble on single-stranded DNA to form a nucleoprotein filament. Hydrolyzes ATP in a ssDNA-dependent manner and promotes DNA strand exchange between homologous DNA molecules. The polypeptide is DNA repair and recombination protein RadA (Methanococcus maripaludis (strain C7 / ATCC BAA-1331)).